The sequence spans 713 residues: uncharacterized protein (713 aa).

A helical transmembrane segment spans residues 686–706; that stretch reads VWKFNPALYSTITNIFLLIIF.

The protein belongs to the plectrovirus ORF1 family.

The protein localises to the host membrane. This is an uncharacterized protein from Spiroplasma melliferum (SpV1).